The chain runs to 547 residues: Vacuolar fusion protein MON1 homolog B (547 aa).

The residue at position 1 (Met1) is an N-acetylmethionine. Residues 1–106 are disordered; the sequence is MEAGGDTAAP…GGDPSDEEWR (106 aa). The segment covering 57-66 has biased composition (pro residues); it reads PPSPSPPPQS. A phosphoserine mark is found at Ser59 and Ser61.

It belongs to the MON1/SAND family. Interacts with CCNT2; down-regulates CCNT2-mediated activation of viral promoters during herpes simplex virus 1/HHV-1 infection. Found in a complex with RMC1, CCZ1 MON1A and MON1B.

This is Vacuolar fusion protein MON1 homolog B (MON1B) from Macaca fascicularis (Crab-eating macaque).